A 65-amino-acid chain; its full sequence is Large ribosomal subunit protein uL30 (65 aa).

Belongs to the universal ribosomal protein uL30 family. In terms of assembly, part of the 50S ribosomal subunit.

The sequence is that of Large ribosomal subunit protein uL30 from Chloroflexus aurantiacus (strain ATCC 29366 / DSM 635 / J-10-fl).